A 119-amino-acid chain; its full sequence is Holo-[acyl-carrier-protein] synthase (119 aa).

Residues aspartate 8 and glutamate 58 each contribute to the Mg(2+) site.

This sequence belongs to the P-Pant transferase superfamily. AcpS family. It depends on Mg(2+) as a cofactor.

The protein resides in the cytoplasm. The catalysed reaction is apo-[ACP] + CoA = holo-[ACP] + adenosine 3',5'-bisphosphate + H(+). Functionally, transfers the 4'-phosphopantetheine moiety from coenzyme A to a Ser of acyl-carrier-protein. This Oceanobacillus iheyensis (strain DSM 14371 / CIP 107618 / JCM 11309 / KCTC 3954 / HTE831) protein is Holo-[acyl-carrier-protein] synthase.